The chain runs to 167 residues: MNNKHPKNKAKSTTTPKTIALNKRARHEYHLIERHEAGLELQGWEVKAIRAGRANLGDGYAYVRDGEIFLIGAQITPLIQASTHVVANDRRTRKLLLHRHQIDTLIGRVQREGFTLVPTAMYWSKNRVKMEIALAKGKQAHDKRHAEKEREWQRDKQRIMRAHNRNA.

The segment at 139–167 (QAHDKRHAEKEREWQRDKQRIMRAHNRNA) is disordered. Over residues 144-158 (RHAEKEREWQRDKQR) the composition is skewed to basic and acidic residues.

The protein belongs to the SmpB family.

It is found in the cytoplasm. Required for rescue of stalled ribosomes mediated by trans-translation. Binds to transfer-messenger RNA (tmRNA), required for stable association of tmRNA with ribosomes. tmRNA and SmpB together mimic tRNA shape, replacing the anticodon stem-loop with SmpB. tmRNA is encoded by the ssrA gene; the 2 termini fold to resemble tRNA(Ala) and it encodes a 'tag peptide', a short internal open reading frame. During trans-translation Ala-aminoacylated tmRNA acts like a tRNA, entering the A-site of stalled ribosomes, displacing the stalled mRNA. The ribosome then switches to translate the ORF on the tmRNA; the nascent peptide is terminated with the 'tag peptide' encoded by the tmRNA and targeted for degradation. The ribosome is freed to recommence translation, which seems to be the essential function of trans-translation. This is SsrA-binding protein from Xylella fastidiosa (strain M23).